A 419-amino-acid polypeptide reads, in one-letter code: MYHPNYNYPPPQPGWGGGYYPPPQQHQQQQQWSPPPPQPYYSNGYPPPSQSPHSYSPPQYPPHGQYEYGHHTPTPPPSSGSQYRSYHSHSPSWGQMPPRPPMEAQQFGKGAPSNYRFQYSACTGRRKALLIGINYAGQPNALRGCINDVTNMSTFLHERYGYRREDMVILTDDQQNPMSVPTKANILRAMQWLVKDAQRNDSLFIHFSGHGGRTPDLDGDEEDGYDDVIYPVDYRTAGHIVDDDMHAIMVRPLQPGVRLTAIFDSCHSGTALDLPYVYSTQGILKEPNLAKEAAQDLFSAITSYGQGDFASVAQTAIGFLKKAALGESARERTVKTKTSPADVVMFSGSKDTQTSADTFQDGQARGALSWAFIKTLQARPNQSYLQLLNSIRSELEGKYSQKPQLSCSHPLDTNLLFVM.

The tract at residues 1–109 (MYHPNYNYPP…PPMEAQQFGK (109 aa)) is disordered. A compositionally biased stretch (pro residues) spans 33–50 (SPPPPQPYYSNGYPPPSQ). The span at 51 to 66 (SPHSYSPPQYPPHGQY) shows a compositional bias: low complexity. Residues 82–93 (QYRSYHSHSPSW) are compositionally biased toward polar residues. Active-site residues include His210 and Cys266.

It belongs to the peptidase C14B family.

In terms of biological role, involved in cell death (apoptosis). The sequence is that of Metacaspase-1B (casB) from Aspergillus oryzae (strain ATCC 42149 / RIB 40) (Yellow koji mold).